A 117-amino-acid polypeptide reads, in one-letter code: MSTVELLKHIYDINLSYLLLAQRLINHEKASAMFRLGISDSMADTLSELTLPQLVKLAETNQLVCNFRFEESETIQQLTRESRVDDLQQIHTGILLSTHLFQKLFSKKDDTSVKKRA.

This sequence belongs to the FlhD family. As to quaternary structure, homodimer; disulfide-linked. Forms a heterohexamer composed of two FlhC and four FlhD subunits. Each FlhC binds a FlhD dimer, forming a heterotrimer, and a hexamer assembles by dimerization of two heterotrimers.

Its subcellular location is the cytoplasm. Functions in complex with FlhC as a master transcriptional regulator that regulates transcription of several flagellar and non-flagellar operons by binding to their promoter region. Activates expression of class 2 flagellar genes, including fliA, which is a flagellum-specific sigma factor that turns on the class 3 genes. Also regulates genes whose products function in a variety of physiological pathways. In Photorhabdus laumondii subsp. laumondii (strain DSM 15139 / CIP 105565 / TT01) (Photorhabdus luminescens subsp. laumondii), this protein is Flagellar transcriptional regulator FlhD.